A 493-amino-acid polypeptide reads, in one-letter code: Transmembrane protein 145 (493 aa).

Residues 9-29 (LRRLLPPLLLLLLSLPPRARA) form a helical membrane-spanning segment. N35 is a glycosylation site (N-linked (GlcNAc...) asparagine). Helical transmembrane passes span 175–195 (VTFL…GYLL), 207–227 (MFMA…IYWG), 241–261 (ILAK…LILL), 282–302 (VYMT…AEFF), 318–338 (GLIG…LVSL), 349–369 (VPFF…ALIA), and 381–401 (IVNG…LIMT). N-linked (GlcNAc...) asparagine glycosylation occurs at N444. The disordered stretch occupies residues 464–493 (PATSPLPRAAPDSGLPLFRDLRPPGPLRDL).

The protein localises to the membrane. This Homo sapiens (Human) protein is Transmembrane protein 145 (TMEM145).